The following is a 477-amino-acid chain: Cytochrome c oxidase subunit 1 (477 aa).

Residues 16–36 (VGTMYLMLGMWSGFGGLNLSW) traverse the membrane as a helical segment. The Ca(2+) site is built by glutamate 41 and glycine 46. Residue histidine 62 participates in Fe(II)-heme a binding. The next 6 membrane-spanning stretches (helical) occupy residues 64 to 84 (IMMIFSFVMPVLIGGFGNWLL), 101 to 121 (FSFWVLPPALYLVIVSCFIDY), 149 to 171 (ILGLHLAGISSSAESINYLVTFL), 185 to 205 (LFVWALAVTSFLLLVSLPVLA), 236 to 256 (LFWFFGHPEVYVLILPGFGLV), and 269 to 289 (VFGSVAMMYAMISIGVLGFIV). Cu cation is bound at residue histidine 242. Positions 242 to 246 (HPEVY) form a cross-link, 1'-histidyl-3'-tyrosine (His-Tyr). Tyrosine 246 lines the O2 pocket. Positions 292 and 293 each coordinate Cu cation. A run of 2 helical transmembrane segments spans residues 309–329 (AVTMLIAVPTGVKVFSWIATI) and 340–360 (TLWVLGFIMKFTMGGITGVIL). Mg(2+) is bound by residues histidine 370 and aspartate 371. Histidine 378 contributes to the heme a3 binding site. Residue histidine 380 participates in Fe(II)-heme a binding. Transmembrane regions (helical) follow at residues 382 to 402 (VLSMGAVFTIFAGYIHYFPFF) and 416 to 436 (FFLTFVGVNLTFFPQHFLGLG). Residue proline 443 coordinates Ca(2+). A helical transmembrane segment spans residues 455-475 (WSTIGCAMVMVSVSLFIHMQW).

Belongs to the heme-copper respiratory oxidase family. Component of the cytochrome c oxidase (complex IV, CIV), a multisubunit enzyme composed of a catalytic core of 3 subunits and several supernumerary subunits. The complex exists as a monomer or a dimer and forms supercomplexes (SCs) in the inner mitochondrial membrane with ubiquinol-cytochrome c oxidoreductase (cytochrome b-c1 complex, complex III, CIII). The cofactor is heme. It depends on Cu cation as a cofactor.

It is found in the mitochondrion inner membrane. The catalysed reaction is 4 Fe(II)-[cytochrome c] + O2 + 8 H(+)(in) = 4 Fe(III)-[cytochrome c] + 2 H2O + 4 H(+)(out). The protein operates within energy metabolism; oxidative phosphorylation. Its function is as follows. Component of the cytochrome c oxidase, the last enzyme in the mitochondrial electron transport chain which drives oxidative phosphorylation. The respiratory chain contains 3 multisubunit complexes succinate dehydrogenase (complex II, CII), ubiquinol-cytochrome c oxidoreductase (cytochrome b-c1 complex, complex III, CIII) and cytochrome c oxidase (complex IV, CIV), that cooperate to transfer electrons derived from NADH and succinate to molecular oxygen, creating an electrochemical gradient over the inner membrane that drives transmembrane transport and the ATP synthase. Cytochrome c oxidase is the component of the respiratory chain that catalyzes the reduction of oxygen to water. Electrons originating from reduced cytochrome c in the intermembrane space (IMS) are transferred via the dinuclear copper A center (CU(A)) of subunit 2 and heme A of subunit 1 to the active site in subunit 1, a binuclear center (BNC) formed by heme A3 and copper B (CU(B)). The BNC reduces molecular oxygen to 2 water molecules using 4 electrons from cytochrome c in the IMS and 4 protons from the mitochondrial matrix. This is Cytochrome c oxidase subunit 1 (COI) from Pecten maximus (King scallop).